Here is a 566-residue protein sequence, read N- to C-terminus: Beta,beta-carotene 15,15'-dioxygenase (566 aa).

Residues H172, H237, H308, and H514 each contribute to the Fe cation site. A disordered region spans residues 530-566 (PAETQEVENSDHPTDPTAPELSHSENDFTAGHGGSSL).

This sequence belongs to the carotenoid oxygenase family. It depends on Fe(2+) as a cofactor. In terms of tissue distribution, expressed in liver, kidney, small intestine and testis.

Its subcellular location is the cytoplasm. It localises to the cytosol. The catalysed reaction is all-trans-beta-carotene + O2 = 2 all-trans-retinal. Its pathway is cofactor metabolism; retinol metabolism. Its function is as follows. Symmetrically cleaves beta-carotene into two molecules of retinal using a dioxygenase mechanism. This chain is Beta,beta-carotene 15,15'-dioxygenase, found in Mus musculus (Mouse).